The primary structure comprises 192 residues: MLKKTLLSLTAVSMLASAGSALAAEYKFDKEGQHAFIEFRIKHLGYSWLYGSFNDFDGTFAFDEKNPSADKVNVTINTNSVDTNHAERDKHLRSAEFLNVSKHPQATFTSTEVKKDGDDYDITGNLTLNGVTKPVKLDAKLIGQGDDPWGNYRAGFQAEGTIKLKDFNITTDLGPASQDVELIIAVEGVRQK.

The first 23 residues, 1 to 23 (MLKKTLLSLTAVSMLASAGSALA), serve as a signal peptide directing secretion.

It belongs to the UPF0312 family. Type 1 subfamily.

The protein resides in the periplasm. This is UPF0312 protein ECA1782 from Pectobacterium atrosepticum (strain SCRI 1043 / ATCC BAA-672) (Erwinia carotovora subsp. atroseptica).